Here is a 405-residue protein sequence, read N- to C-terminus: Multifunctional CCA protein (405 aa).

Residues Gly-8 and Arg-11 each coordinate ATP. Residues Gly-8 and Arg-11 each coordinate CTP. Mg(2+) contacts are provided by Asp-21 and Asp-23. ATP is bound by residues Arg-91, Arg-137, and Arg-140. 3 residues coordinate CTP: Arg-91, Arg-137, and Arg-140. Residues Thr-225–Leu-326 enclose the HD domain.

Belongs to the tRNA nucleotidyltransferase/poly(A) polymerase family. Bacterial CCA-adding enzyme type 1 subfamily. Monomer. Can also form homodimers and oligomers. Mg(2+) is required as a cofactor. Requires Ni(2+) as cofactor.

The catalysed reaction is a tRNA precursor + 2 CTP + ATP = a tRNA with a 3' CCA end + 3 diphosphate. It catalyses the reaction a tRNA with a 3' CCA end + 2 CTP + ATP = a tRNA with a 3' CCACCA end + 3 diphosphate. Functionally, catalyzes the addition and repair of the essential 3'-terminal CCA sequence in tRNAs without using a nucleic acid template. Adds these three nucleotides in the order of C, C, and A to the tRNA nucleotide-73, using CTP and ATP as substrates and producing inorganic pyrophosphate. tRNA 3'-terminal CCA addition is required both for tRNA processing and repair. Also involved in tRNA surveillance by mediating tandem CCA addition to generate a CCACCA at the 3' terminus of unstable tRNAs. While stable tRNAs receive only 3'-terminal CCA, unstable tRNAs are marked with CCACCA and rapidly degraded. This chain is Multifunctional CCA protein, found in Laribacter hongkongensis (strain HLHK9).